The primary structure comprises 202 residues: Peroxynitrite isomerase (202 aa).

The GXWXGXG signature appears at 21–27 (GEWEGRG). H193 is a heme b binding site.

This sequence belongs to the nitrobindin family. Homodimer. Heme b serves as cofactor.

It catalyses the reaction peroxynitrite = nitrate. It functions in the pathway nitrogen metabolism. Heme-binding protein able to scavenge peroxynitrite and to protect free L-tyrosine against peroxynitrite-mediated nitration, by acting as a peroxynitrite isomerase that converts peroxynitrite to nitrate. Therefore, this protein likely plays a role in peroxynitrite sensing and in the detoxification of reactive nitrogen and oxygen species (RNS and ROS, respectively). Is able to bind nitric oxide (NO) in vitro, but may act as a sensor of peroxynitrite levels in vivo. This chain is Peroxynitrite isomerase, found in Pseudarthrobacter chlorophenolicus (strain ATCC 700700 / DSM 12829 / CIP 107037 / JCM 12360 / KCTC 9906 / NCIMB 13794 / A6) (Arthrobacter chlorophenolicus).